A 266-amino-acid chain; its full sequence is Dioicin-2 (266 aa).

Intrachain disulfides connect Cys32/Cys263 and Cys85/Cys102. Glu176 is an active-site residue.

The protein resides in the secreted. The protein localises to the extracellular space. Its subcellular location is the golgi apparatus. It localises to the vacuole. The catalysed reaction is Endohydrolysis of the N-glycosidic bond at one specific adenosine on the 28S rRNA.. Functionally, nicks pBR322 dsDNA. Has adenine polynucleotide glycosidase activity on herring sperm ssDNA. The protein is Dioicin-2 of Phytolacca dioica (Bella sombra tree).